A 145-amino-acid chain; its full sequence is 3-dehydroquinate dehydratase (145 aa).

Catalysis depends on Tyr24, which acts as the Proton acceptor. Substrate is bound by residues Asn75, His81, and Asp88. His102 (proton donor) is an active-site residue. Residues 103-104 (LS) and Arg113 each bind substrate.

This sequence belongs to the type-II 3-dehydroquinase family. In terms of assembly, homododecamer.

The catalysed reaction is 3-dehydroquinate = 3-dehydroshikimate + H2O. It participates in metabolic intermediate biosynthesis; chorismate biosynthesis; chorismate from D-erythrose 4-phosphate and phosphoenolpyruvate: step 3/7. Catalyzes a trans-dehydration via an enolate intermediate. This is 3-dehydroquinate dehydratase from Chelativorans sp. (strain BNC1).